The chain runs to 162 residues: Transcriptional repressor NrdR (162 aa).

A zinc finger spans residues 3–34 (CPFCQFEGLKVTDSRDAMEMNAIRRRRECLNC). The region spanning 48–138 (VQVQKRDGTY…VYKRFKDLGE (91 aa)) is the ATP-cone domain.

The protein belongs to the NrdR family. Requires Zn(2+) as cofactor.

Its function is as follows. Negatively regulates transcription of bacterial ribonucleotide reductase nrd genes and operons by binding to NrdR-boxes. The polypeptide is Transcriptional repressor NrdR (Protochlamydia amoebophila (strain UWE25)).